Here is a 601-residue protein sequence, read N- to C-terminus: MEVLCQAPAGNSNFACNPKFTAIRTRAISSNDTFKVISSTGNNKKMKGAIRTSIPKPSALPLKVSQLSPSADSMPVPASLQDVEAGKLIENNPSGGDTEELFQYLVEILASRVYDVAIDSPLQNAAKLSKKLGVNFWIKREDMQSVFSFKLRGAYNMMTKLSKEQLERGVITASAGNHAQGVALGAQRLKCTATIVMPVTTPEIKIEAVKNLDGKVVLHGDTFDKAQEHALKLAEDEGLTFIPPFDHPDVIIGQGTIGTEINRQLKDIHAVFVPVGGGGLIAGVAAYFKRVAPHTKIIGVEPFGASSMTQSLYHGERVKLEQVDNFADGVAVALVGEETFRLCKDLIDGMVLVSNDAISAAVKDVYDEGRNILETSGALAIAGAEAYCKYYNIKGENVVAIASGANMDFSKLKLVVDLADIGGQREALLATFMPEEPGSFKKFCELVGPMNITEFKYRYNSGRKQALVLYSVGVNTKSDLESMLERMKSSQLNTVNLTNNNLVKEHLRHLMGGRSEPSNEIFCQFIFPEKPGALRKFLDAFSPRWNISLFHYREQGELDASVLVGFQVPKGEIEEFRVQANNLGYSYEIESLNEASQLIME.

A chloroplast-targeting transit peptide spans 1 to 51 (MEVLCQAPAGNSNFACNPKFTAIRTRAISSNDTFKVISSTGNNKKMKGAIR). ACT-like domains follow at residues 427-499 (ALLA…NLTN) and 521-592 (IFCQ…IESL).

Belongs to the serine/threonine dehydratase family. Pyridoxal 5'-phosphate serves as cofactor.

The protein resides in the plastid. The protein localises to the chloroplast. It catalyses the reaction L-threonine = 2-oxobutanoate + NH4(+). The protein operates within amino-acid biosynthesis; L-isoleucine biosynthesis; 2-oxobutanoate from L-threonine: step 1/1. In terms of biological role, catalyzes the conversion of threonine to alpha-keto butyrate in isoleucine (Ile) biosynthesis. Required for JA-Ile biosynthesis, a signaling molecule involved in defense and resistance to the herbivore Manduca sexta caterpillars. This chain is Threonine dehydratase, found in Nicotiana attenuata (Coyote tobacco).